A 224-amino-acid chain; its full sequence is 7-cyano-7-deazaguanine synthase (224 aa).

Leucine 9–leucine 19 provides a ligand contact to ATP. Positions 188, 198, 201, and 204 each coordinate Zn(2+).

It belongs to the QueC family. The cofactor is Zn(2+).

The enzyme catalyses 7-carboxy-7-deazaguanine + NH4(+) + ATP = 7-cyano-7-deazaguanine + ADP + phosphate + H2O + H(+). It functions in the pathway purine metabolism; 7-cyano-7-deazaguanine biosynthesis. In terms of biological role, catalyzes the ATP-dependent conversion of 7-carboxy-7-deazaguanine (CDG) to 7-cyano-7-deazaguanine (preQ(0)). The chain is 7-cyano-7-deazaguanine synthase from Thiobacillus denitrificans (strain ATCC 25259 / T1).